We begin with the raw amino-acid sequence, 137 residues long: Large ribosomal subunit protein uL16 (137 aa).

It belongs to the universal ribosomal protein uL16 family. In terms of assembly, part of the 50S ribosomal subunit.

Its function is as follows. Binds 23S rRNA and is also seen to make contacts with the A and possibly P site tRNAs. The protein is Large ribosomal subunit protein uL16 of Azorhizobium caulinodans (strain ATCC 43989 / DSM 5975 / JCM 20966 / LMG 6465 / NBRC 14845 / NCIMB 13405 / ORS 571).